We begin with the raw amino-acid sequence, 484 residues long: MSLARSTALLDEKNTLTSSVTDKYRLAGKITQTCLQHIIQTVLTQYETYTVGEMCRMGDEFLERATTAVYKSVAEKGIAQPVRIEKQEFVGGVSPENGDKFQGGMLAPGDLVKISLGVYIDGYTAQVTQTEVVRHVPNTSAGETEQPLTGSPADAVCASYLASEAVIAYLAQVTDPNPGKAVGVVTGTKIRELVEKIAAAYHVKIVPGSSVRRIRRFLAGQHDIVLERDYKGVLWEVEGEEERALHAVKLAESEAKQESTEGAVCLYEQHIEEEENFTVEAGEAYQVDIQMAAAPQKGAIRLYDFQGYDESGTVINQYGRDFSVTYGLKIQASRKLLSQLEATTSVYPFKLSHVESNVAKARLGLGEILAHQILVPIPVKVAKFVPLAALYEFSKNSKARARDEASKAVPVARNSSSVLLTNDACLRLTGGQAFPPPYVHSAFELPEDVTNLLKLVGHKHGAKVKDVLPGDVDMAPAKEAKMEE.

The protein belongs to the peptidase M24 family. Component of the nucleoplasmic and cytoplasmic pre-60S ribosomal particles.

The protein localises to the cytoplasm. Its subcellular location is the nucleus. Functionally, probable metalloprotease involved in proper assembly of pre-ribosomal particles during the biogenesis of the 60S ribosomal subunit. Accompanies the pre-60S particles to the cytoplasm. The chain is Probable metalloprotease ARX1 (ARX1) from Yarrowia lipolytica (strain CLIB 122 / E 150) (Yeast).